A 333-amino-acid chain; its full sequence is DNA-directed RNA polymerase subunit alpha (333 aa).

An alpha N-terminal domain (alpha-NTD) region spans residues 1–234 (MQSSVNEFLT…QQLAAFVDLK (234 aa)). Positions 248-333 (IDPILLRPVD…SLKKDDKATA (86 aa)) are alpha C-terminal domain (alpha-CTD).

Belongs to the RNA polymerase alpha chain family. In terms of assembly, homodimer. The RNAP catalytic core consists of 2 alpha, 1 beta, 1 beta' and 1 omega subunit. When a sigma factor is associated with the core the holoenzyme is formed, which can initiate transcription.

The enzyme catalyses RNA(n) + a ribonucleoside 5'-triphosphate = RNA(n+1) + diphosphate. In terms of biological role, DNA-dependent RNA polymerase catalyzes the transcription of DNA into RNA using the four ribonucleoside triphosphates as substrates. This chain is DNA-directed RNA polymerase subunit alpha, found in Pseudomonas putida (Arthrobacter siderocapsulatus).